A 479-amino-acid polypeptide reads, in one-letter code: ESX-1 secretion system ATPase EccB1 (479 aa).

Residues 1–44 lie on the Cytoplasmic side of the membrane; it reads MAGFRLTTKVQVSGWRFLLRRVEHAIVRRDTRMFDDPLQFYSRA. A helical membrane pass occupies residues 45-65; the sequence is VFAGVVVSVLICLGAALMAYF. The Periplasmic segment spans residues 66 to 479; it reads KPLGKQGSDQ…NPRKVASGEG (414 aa). Cys-152 and Cys-347 are joined by a disulfide.

This sequence belongs to the EccB family. Part of the ESX-1 / type VII secretion system (T7SS), which is composed of cytosolic and membrane components. The ESX-1 membrane complex is composed of EccB1, EccCa1, EccCb1, EccD1 and EccE1.

It is found in the cell inner membrane. Its function is as follows. An ATPase. Part of the ESX-1 / type VII specialized secretion system (T7SS), which exports several proteins including EsxA and EsxB. Plays a role in DNA conjugation, in both donor and recipient strains. The sequence is that of ESX-1 secretion system ATPase EccB1 from Mycolicibacterium smegmatis (strain MKD8) (Mycobacterium smegmatis).